The following is a 278-amino-acid chain: Tryptophan synthase alpha chain (278 aa).

Active-site proton acceptor residues include glutamate 50 and aspartate 61.

It belongs to the TrpA family. As to quaternary structure, tetramer of two alpha and two beta chains.

It catalyses the reaction (1S,2R)-1-C-(indol-3-yl)glycerol 3-phosphate + L-serine = D-glyceraldehyde 3-phosphate + L-tryptophan + H2O. It participates in amino-acid biosynthesis; L-tryptophan biosynthesis; L-tryptophan from chorismate: step 5/5. Its function is as follows. The alpha subunit is responsible for the aldol cleavage of indoleglycerol phosphate to indole and glyceraldehyde 3-phosphate. In Nitrobacter winogradskyi (strain ATCC 25391 / DSM 10237 / CIP 104748 / NCIMB 11846 / Nb-255), this protein is Tryptophan synthase alpha chain.